Here is a 415-residue protein sequence, read N- to C-terminus: Histidine--tRNA ligase (415 aa).

Belongs to the class-II aminoacyl-tRNA synthetase family. In terms of assembly, homodimer.

The protein resides in the cytoplasm. It catalyses the reaction tRNA(His) + L-histidine + ATP = L-histidyl-tRNA(His) + AMP + diphosphate + H(+). The protein is Histidine--tRNA ligase of Clostridium botulinum (strain 657 / Type Ba4).